We begin with the raw amino-acid sequence, 116 residues long: MKRLLPSLRAKKRYLAFELISEEPASRSDIVKEVMSSASSLLGDVTTSDCDIRVLGFENGKGIIQCSHTKVKQTRASLAALTRINGKRATLHVLGVSGTVKRATEKFLQDEGVFSS.

Belongs to the eukaryotic/archaeal RNase P protein component 2 family. As to quaternary structure, consists of a catalytic RNA component and at least 4-5 protein subunits.

Its subcellular location is the cytoplasm. The enzyme catalyses Endonucleolytic cleavage of RNA, removing 5'-extranucleotides from tRNA precursor.. Its function is as follows. Part of ribonuclease P, a protein complex that generates mature tRNA molecules by cleaving their 5'-ends. In Methanosarcina mazei (strain ATCC BAA-159 / DSM 3647 / Goe1 / Go1 / JCM 11833 / OCM 88) (Methanosarcina frisia), this protein is Ribonuclease P protein component 2.